The following is a 500-amino-acid chain: Probable glycine dehydrogenase (decarboxylating) subunit 2 (500 aa).

The interval 1–25 (MLIFEHSRPGRRNYSQSPKAAEATD) is disordered. N6-(pyridoxal phosphate)lysine is present on Lys263.

It belongs to the GcvP family. C-terminal subunit subfamily. As to quaternary structure, the glycine cleavage system is composed of four proteins: P, T, L and H. In this organism, the P 'protein' is a heterodimer of two subunits. The cofactor is pyridoxal 5'-phosphate.

It catalyses the reaction N(6)-[(R)-lipoyl]-L-lysyl-[glycine-cleavage complex H protein] + glycine + H(+) = N(6)-[(R)-S(8)-aminomethyldihydrolipoyl]-L-lysyl-[glycine-cleavage complex H protein] + CO2. Functionally, the glycine cleavage system catalyzes the degradation of glycine. The P protein binds the alpha-amino group of glycine through its pyridoxal phosphate cofactor; CO(2) is released and the remaining methylamine moiety is then transferred to the lipoamide cofactor of the H protein. The sequence is that of Probable glycine dehydrogenase (decarboxylating) subunit 2 from Nitrosospira multiformis (strain ATCC 25196 / NCIMB 11849 / C 71).